An 85-amino-acid chain; its full sequence is Small ribosomal subunit protein bS16 (85 aa).

Belongs to the bacterial ribosomal protein bS16 family.

The sequence is that of Small ribosomal subunit protein bS16 from Xanthomonas oryzae pv. oryzae (strain PXO99A).